Here is a 329-residue protein sequence, read N- to C-terminus: G-protein coupled bile acid receptor 1 (329 aa).

Residues 1 to 18 (MMSHNTTELSAIPRGVQE) are Extracellular-facing. Residue Asn-5 is glycosylated (N-linked (GlcNAc...) asparagine). A helical membrane pass occupies residues 19-39 (LSLVLASLIVIANLLLALGIV). Over 40–49 (LDRHLRSPPA) the chain is Cytoplasmic. A helical membrane pass occupies residues 50–70 (GCFFLSLLLAGLLTGLALPTL). Topologically, residues 71 to 84 (PGLWNRSHQGYWSC) are extracellular. The N-linked (GlcNAc...) asparagine glycan is linked to Asn-75. A disulfide bond links Cys-84 and Cys-154. A helical transmembrane segment spans residues 85–105 (LLLHLAPNFCFLSLLANLLLV). Topologically, residues 106–124 (HGERYMAVLQPLRPHGSVR) are cytoplasmic. Residues 125-145 (LALFLTWISSLLFASLPALGW) traverse the membrane as a helical segment. Topologically, residues 146–157 (NHWSPGANCSSQ) are extracellular. N-linked (GlcNAc...) asparagine glycosylation occurs at Asn-153. Residues 158–178 (AIFPAPYLYLEVYGLLLPAVG) form a helical membrane-spanning segment. Residues 179-229 (ATALLSVRVLATAHHQLREIRRLERAVCRDAPSTLARALTWRQARAQAGAT) lie on the Cytoplasmic side of the membrane. A helical transmembrane segment spans residues 230–250 (LLFLLCWGPYVATLLLSVLAY). Over 251 to 260 (ERRPPLGPVT) the chain is Extracellular. The helical transmembrane segment at 261–281 (LLSLISLGSASAAVVPVAMGL) threads the bilayer. Residues 282–329 (GDQRYTAPWRTAAQRWLQVLRGRPKRANPGPSTAYHSSSQCSTDLDLN) lie on the Cytoplasmic side of the membrane. Residues 306–329 (KRANPGPSTAYHSSSQCSTDLDLN) form a disordered region. Residues 311–329 (GPSTAYHSSSQCSTDLDLN) show a composition bias toward polar residues.

It belongs to the G-protein coupled receptor 1 family.

It is found in the cell membrane. Receptor for bile acid. Bile acid-binding induces its internalization, activation of extracellular signal-regulated kinase and intracellular cAMP production. May be involved in the suppression of macrophage functions by bile acids. Involved in bile acid promoted GLP1R secretion. This Rattus norvegicus (Rat) protein is G-protein coupled bile acid receptor 1 (Gpbar1).